The following is a 902-amino-acid chain: Cytosolic 10-formyltetrahydrofolate dehydrogenase (902 aa).

The hydrolase domain stretch occupies residues 1-310; the sequence is MKIAVIGQSL…PASQYYKTAD (310 aa). A (6R)-10-formyltetrahydrofolate-binding site is contributed by 88–90; sequence QFI. H106 serves as the catalytic Proton donor. D142 serves as a coordination point for (6R)-10-formyltetrahydrofolate. The 78-residue stretch at 318–395 folds into the Carrier domain; it reads DEEKKFSEEI…EFIQMVVRRL (78 aa). O-(pantetheine 4'-phosphoryl)serine is present on S354. The segment at 417–902 is aldehyde dehydrogenase domain; sequence TVKIPHQLFI…LKTKAVTIEY (486 aa). Residues 571–573, 597–600, 630–635, 650–651, and 673–674 contribute to the NADP(+) site; these read IPW, KPAQ, GSLIGQ, GS, and EL. Residue E673 is the Proton acceptor of the active site. C707 functions as the Proton donor in the catalytic mechanism. NADP(+) is bound by residues K757 and 804–806; that span reads ESF.

The protein in the N-terminal section; belongs to the GART family. This sequence in the C-terminal section; belongs to the aldehyde dehydrogenase family. ALDH1L subfamily. In terms of assembly, homotetramer. In terms of processing, phosphopantetheinylation at Ser-354 by AASDHPPT is required for the formyltetrahydrofolate dehydrogenase activity.

It localises to the cytoplasm. Its subcellular location is the cytosol. The catalysed reaction is (6R)-10-formyltetrahydrofolate + NADP(+) + H2O = (6S)-5,6,7,8-tetrahydrofolate + CO2 + NADPH + H(+). In terms of biological role, cytosolic 10-formyltetrahydrofolate dehydrogenase that catalyzes the NADP(+)-dependent conversion of 10-formyltetrahydrofolate to tetrahydrofolate and carbon dioxide. May also have an NADP(+)-dependent aldehyde dehydrogenase activity towards formaldehyde, acetaldehyde, propionaldehyde, and benzaldehyde. Regulates reduced folate pools as well as glycine metabolism. This is Cytosolic 10-formyltetrahydrofolate dehydrogenase (aldh1l1) from Xenopus tropicalis (Western clawed frog).